Here is a 217-residue protein sequence, read N- to C-terminus: Small ribosomal subunit protein uS3 (217 aa).

In terms of domain architecture, KH type-2 spans 40 to 110; sequence IRDLINKGFN…EVYINIHEVR (71 aa).

Belongs to the universal ribosomal protein uS3 family. As to quaternary structure, part of the 30S ribosomal subunit. Forms a tight complex with proteins S10 and S14.

Binds the lower part of the 30S subunit head. Binds mRNA in the 70S ribosome, positioning it for translation. The polypeptide is Small ribosomal subunit protein uS3 (Rickettsia akari (strain Hartford)).